The following is a 260-amino-acid chain: Thrombin-like enzyme flavoxobin (260 aa).

A signal peptide spans 1–18 (MVLIRVLANLLILQLSYA). The propeptide occupies 19 to 24 (QKSSEL). A Peptidase S1 domain is found at 25 to 251 (VIGGDECNIN…YNAWIQSIIA (227 aa)). 6 disulfides stabilise this stretch: Cys31-Cys165, Cys52-Cys68, Cys100-Cys258, Cys144-Cys212, Cys176-Cys191, and Cys202-Cys227. Catalysis depends on charge relay system residues His67 and Asp112. Ser206 serves as the catalytic Charge relay system.

This sequence belongs to the peptidase S1 family. Snake venom subfamily. Monomer. Expressed by the venom gland.

It is found in the secreted. The catalysed reaction is Selective cleavage of Arg-|-Xaa bond in fibrinogen, to form fibrin, and release fibrinopeptide A. The specificity of further degradation of fibrinogen varies with species origin of the enzyme.. With respect to regulation, inhibited by alpha(2)-macroglobulin, diisopropylfluorophosphate (DFP) and PMSF. Low inhibition by tosyl-L-lysine chloromethyl ketone. In terms of biological role, thrombin-like snake venom serine protease that clots fibrinogen (FGA) by releasing fibrinopeptide A. According to PubMed:8585090, only cleaves rabbit fibrinogen, whereas no specificity is described in PubMed:3910643 (tests done on bovine fibrinogen). Also acts as a C3 convertase that independently cleaves human C3 and kick-starts the complement cascade. Also increases urokinase-type plasminogen activator (PLAU) and plasminogen activator inhibitor (SERPINE1) in cultured bovine pulmonary artery endothelial cells. Dose-dependently inhibits collagen-induced platelet aggregation. The polypeptide is Thrombin-like enzyme flavoxobin (TLF1) (Protobothrops flavoviridis (Habu)).